Reading from the N-terminus, the 198-residue chain is Imidazoleglycerol-phosphate dehydratase (198 aa).

This sequence belongs to the imidazoleglycerol-phosphate dehydratase family.

The protein localises to the cytoplasm. The enzyme catalyses D-erythro-1-(imidazol-4-yl)glycerol 3-phosphate = 3-(imidazol-4-yl)-2-oxopropyl phosphate + H2O. It participates in amino-acid biosynthesis; L-histidine biosynthesis; L-histidine from 5-phospho-alpha-D-ribose 1-diphosphate: step 6/9. The protein is Imidazoleglycerol-phosphate dehydratase of Magnetococcus marinus (strain ATCC BAA-1437 / JCM 17883 / MC-1).